A 155-amino-acid polypeptide reads, in one-letter code: Lectin-like protein EP153R (155 aa).

The Cytoplasmic portion of the chain corresponds to 1–30 (MYFKKKYIGLIDKNCEKKILDDCTTIKICY). The helical transmembrane segment at 31 to 51 (ILIGILIGTNMITLIYNFIFW) threads the bilayer. The Extracellular portion of the chain corresponds to 52-155 (DHYMTCNKKD…YLPLLFICSK (104 aa)). Cysteine 66 and cysteine 77 are disulfide-bonded. The interval 66-154 (CPKDWVGYNN…KYLPLLFICS (89 aa)) is lectin-like. Asparagine 82, asparagine 86, asparagine 98, asparagine 104, asparagine 110, asparagine 124, asparagine 130, and asparagine 137 each carry an N-linked (GlcNAc...) asparagine; by host glycan. The cysteines at positions 94 and 153 are disulfide-linked.

It belongs to the asfivirus lectin-like protein family. In terms of assembly, homodimer.

The protein resides in the host endoplasmic reticulum membrane. Down-regulates MHC-I expression by impairing the appropriate configuration or presentation into the plasma membrane of the latter. Participates in viral hemadsorption, which may help viral spread. Reduces the transactivating activity of host TP53, thus inhibiting apoptosis. Non-essential for virus growth in swine macrophage cell cultures. The chain is Lectin-like protein EP153R from Ornithodoros (relapsing fever ticks).